Consider the following 603-residue polypeptide: Trihelix transcription factor DF1 (603 aa).

A Myb-like 1 domain is found at 60-118 (NRWPRQETLALLKIRSDMGIAFRDASVKGPLWEEVSRKMAEHGYIRNAKKCKEKFENVY). Disordered regions lie at residues 149–201 (QSTT…SSIP), 220–249 (LSDN…TRKK), 333–408 (KQPN…SSSR), and 532–603 (QWPP…TNNL). Low complexity-rich tracts occupy residues 168–178 (NNNNNNNNNNN), 189–198 (TTVMPTLPSS), 221–236 (SDNS…TSSD), and 344–362 (PQQV…QQPP). Over residues 363 to 376 (QRSPPPQPPAPLPQ) the composition is skewed to pro residues. Polar residues predominate over residues 381-408 (VVSTLDTTKTDNGGDQNMTPAASASSSR). One can recognise a Myb-like 2 domain in the interval 401-465 (AASASSSRWP…RCKEKWENIN (65 aa)). Positions 532–555 (QWPPAVTTATTTPAAAQPDQQSQP) are enriched in low complexity. Positions 559–586 (NFDDEEGTDEEYDDEDEEEENEEEEGGE) are enriched in acidic residues. The segment covering 593 to 603 (NNNNNKTTNNL) has biased composition (low complexity).

It localises to the nucleus. In terms of biological role, transcription repressor that negatively regulates root hair growth by directly binding RSL4 promoter and repressing RSL4 expression. Required for the synthesis of seed coat mucilage. This Arabidopsis thaliana (Mouse-ear cress) protein is Trihelix transcription factor DF1.